A 223-amino-acid polypeptide reads, in one-letter code: 2-C-methyl-D-erythritol 4-phosphate cytidylyltransferase (223 aa).

The protein belongs to the IspD/TarI cytidylyltransferase family. IspD subfamily.

The enzyme catalyses 2-C-methyl-D-erythritol 4-phosphate + CTP + H(+) = 4-CDP-2-C-methyl-D-erythritol + diphosphate. Its pathway is isoprenoid biosynthesis; isopentenyl diphosphate biosynthesis via DXP pathway; isopentenyl diphosphate from 1-deoxy-D-xylulose 5-phosphate: step 2/6. Catalyzes the formation of 4-diphosphocytidyl-2-C-methyl-D-erythritol from CTP and 2-C-methyl-D-erythritol 4-phosphate (MEP). In Prochlorococcus marinus (strain AS9601), this protein is 2-C-methyl-D-erythritol 4-phosphate cytidylyltransferase.